A 158-amino-acid polypeptide reads, in one-letter code: 6,7-dimethyl-8-ribityllumazine synthase (158 aa).

Residues Phe22, 56 to 58 (ALE), and 80 to 82 (VVI) contribute to the 5-amino-6-(D-ribitylamino)uracil site. 85–86 (ET) lines the (2S)-2-hydroxy-3-oxobutyl phosphate pocket. The active-site Proton donor is His88. A 5-amino-6-(D-ribitylamino)uracil-binding site is contributed by Asn113. Residue Arg127 participates in (2S)-2-hydroxy-3-oxobutyl phosphate binding.

Belongs to the DMRL synthase family.

It catalyses the reaction (2S)-2-hydroxy-3-oxobutyl phosphate + 5-amino-6-(D-ribitylamino)uracil = 6,7-dimethyl-8-(1-D-ribityl)lumazine + phosphate + 2 H2O + H(+). It participates in cofactor biosynthesis; riboflavin biosynthesis; riboflavin from 2-hydroxy-3-oxobutyl phosphate and 5-amino-6-(D-ribitylamino)uracil: step 1/2. Its function is as follows. Catalyzes the formation of 6,7-dimethyl-8-ribityllumazine by condensation of 5-amino-6-(D-ribitylamino)uracil with 3,4-dihydroxy-2-butanone 4-phosphate. This is the penultimate step in the biosynthesis of riboflavin. In Neisseria gonorrhoeae (strain ATCC 700825 / FA 1090), this protein is 6,7-dimethyl-8-ribityllumazine synthase.